Here is a 379-residue protein sequence, read N- to C-terminus: Eukaryotic translation initiation factor 3 subunit H (379 aa).

In terms of domain architecture, MPN spans 17 to 170 (VQIDSLVVMK…IRAYRLSTKA (154 aa)). Residues 280-291 (RQAENEQREARG) are compositionally biased toward basic and acidic residues. The tract at residues 280–300 (RQAENEQREARGEPPLSFDDI) is disordered.

This sequence belongs to the eIF-3 subunit H family. As to quaternary structure, component of the eukaryotic translation initiation factor 3 (eIF-3) complex.

The protein localises to the cytoplasm. Component of the eukaryotic translation initiation factor 3 (eIF-3) complex, which is involved in protein synthesis of a specialized repertoire of mRNAs and, together with other initiation factors, stimulates binding of mRNA and methionyl-tRNAi to the 40S ribosome. The eIF-3 complex specifically targets and initiates translation of a subset of mRNAs involved in cell proliferation. This is Eukaryotic translation initiation factor 3 subunit H from Brugia malayi (Filarial nematode worm).